The primary structure comprises 55 residues: Preprotein translocase subunit SecG (55 aa).

The Cytoplasmic segment spans residues methionine 1 to glutamine 29. A helical membrane pass occupies residues proline 30 to asparagine 51. Residues glycine 52–proline 55 lie on the Extracellular side of the membrane.

The protein belongs to the SEC61-beta family. Component of the protein translocase complex. Heterotrimer consisting of alpha (SecY), beta (SecG) and gamma (SecE) subunits. Can form oligomers of the heterotrimer.

It is found in the cell membrane. In terms of biological role, involved in protein export. The function of the beta subunit is unknown, but it may be involved in stabilization of the trimeric complex. This is Preprotein translocase subunit SecG from Methanosarcina barkeri (strain Fusaro / DSM 804).